A 38-amino-acid chain; its full sequence is MKVRASVKKICDKCKIVRRKGIVRIICASNPRHKQRQG.

This sequence belongs to the bacterial ribosomal protein bL36 family.

The chain is Large ribosomal subunit protein bL36 from Myxococcus xanthus (strain DK1622).